Here is a 92-residue protein sequence, read N- to C-terminus: Serine protease inhibitor I/II (92 aa).

The first 19 residues, 1-19 (MKLALALCAAFLLVVLVQA), serve as a signal peptide directing secretion. Pacifastin domains follow at residues 20-54 (EQECTPGQTKKQDCNTCNCTPTGVWACTRKGCPPH) and 57-92 (EVTCEPGTTFKDKCNTCRCGSDGKSAACTLKACPQK). 6 cysteine pairs are disulfide-bonded: C23–C38, C33–C51, C36–C46, C60–C75, C70–C89, and C73–C84.

It belongs to the protease inhibitor I19 family. As to expression, expressed in hemolymph, ovaries, testes and fat body of adults but are absent in the gut. Also present in larval hemolymph and fat body.

It is found in the secreted. Functionally, in vitro, is active against alpha-chymotrypsin and trypsin. In terms of biological role, in vitro, is active against alpha-chymotrypsin and pancreatic elastase. The sequence is that of Serine protease inhibitor I/II from Schistocerca gregaria (Desert locust).